The sequence spans 553 residues: Thermosome subunit beta (553 aa).

Residues 534–553 (KKSEGKTGEKKESEKGKEED) form a disordered region.

Belongs to the TCP-1 chaperonin family. As to quaternary structure, forms a Heterooligomeric complex of two stacked eight-membered rings.

Molecular chaperone; binds unfolded polypeptides in vitro, and has a weak ATPase activity. The polypeptide is Thermosome subunit beta (thsB) (Sulfolobus acidocaldarius (strain ATCC 33909 / DSM 639 / JCM 8929 / NBRC 15157 / NCIMB 11770)).